A 447-amino-acid polypeptide reads, in one-letter code: UDP-N-acetylmuramoylalanine--D-glutamate ligase (447 aa).

Position 112–118 (112–118) interacts with ATP; it reads GTNGKST.

It belongs to the MurCDEF family.

Its subcellular location is the cytoplasm. The enzyme catalyses UDP-N-acetyl-alpha-D-muramoyl-L-alanine + D-glutamate + ATP = UDP-N-acetyl-alpha-D-muramoyl-L-alanyl-D-glutamate + ADP + phosphate + H(+). The protein operates within cell wall biogenesis; peptidoglycan biosynthesis. Cell wall formation. Catalyzes the addition of glutamate to the nucleotide precursor UDP-N-acetylmuramoyl-L-alanine (UMA). The polypeptide is UDP-N-acetylmuramoylalanine--D-glutamate ligase (Legionella pneumophila (strain Paris)).